The chain runs to 461 residues: Dihydrofolate reductase (461 aa).

Residues 233–447 form the DHFR domain; the sequence is DLTMIVAVSS…VEIEFELYGK (215 aa). Residues alanine 239 and 246–252 contribute to the NADP(+) site; that span reads GIGKKNS. 260-265 is a substrate binding site; the sequence is EMAYFA. Residue 292–294 participates in NADP(+) binding; sequence RSC. A substrate-binding site is contributed by arginine 308. Residues 314-316 and 365-372 each bind NADP(+); these read TRN and GGSFLYGS.

It belongs to the dihydrofolate reductase family.

The enzyme catalyses (6S)-5,6,7,8-tetrahydrofolate + NADP(+) = 7,8-dihydrofolate + NADPH + H(+). Its pathway is cofactor biosynthesis; tetrahydrofolate biosynthesis; 5,6,7,8-tetrahydrofolate from 7,8-dihydrofolate: step 1/1. In terms of biological role, key enzyme in folate metabolism. Catalyzes an essential reaction for de novo glycine and purine synthesis, and for DNA precursor synthesis. The chain is Dihydrofolate reductase (dfr1) from Schizosaccharomyces pombe (strain 972 / ATCC 24843) (Fission yeast).